A 537-amino-acid chain; its full sequence is Phosphoenolpyruvate carboxykinase (ATP) (537 aa).

Positions 61, 195, and 201 each coordinate substrate. Residues lysine 201, histidine 220, and 236–244 (GLSGTGKTT) each bind ATP. The Mn(2+) site is built by lysine 201 and histidine 220. Aspartate 257 serves as a coordination point for Mn(2+). Glutamate 285, arginine 323, and threonine 448 together coordinate ATP. Residue arginine 323 participates in substrate binding.

The protein belongs to the phosphoenolpyruvate carboxykinase (ATP) family. Requires Mn(2+) as cofactor.

The protein localises to the cytoplasm. The catalysed reaction is oxaloacetate + ATP = phosphoenolpyruvate + ADP + CO2. It participates in carbohydrate biosynthesis; gluconeogenesis. In terms of biological role, involved in the gluconeogenesis. Catalyzes the conversion of oxaloacetate (OAA) to phosphoenolpyruvate (PEP) through direct phosphoryl transfer between the nucleoside triphosphate and OAA. This chain is Phosphoenolpyruvate carboxykinase (ATP), found in Rhodopseudomonas palustris (strain ATCC BAA-98 / CGA009).